The following is a 366-amino-acid chain: Cyclic amide hydrolase (366 aa).

An RU A region spans residues 1–103; it reads MKVGVHKLAM…TLFTRAPDDG (103 aa). Residues arginine 51 and 82 to 83 each bind substrate; that span reads SG. Residues 110–247 are RU B; that stretch reads RLALGIGITR…CEVLLFGNAP (138 aa). Lysine 160 is a catalytic residue. Residues arginine 192, 230-231, arginine 327, and 346-347 each bind substrate; these read SA and SG. Serine 230 acts as the Nucleophile in catalysis. Positions 253-366 are RU C; that stretch reads FRIGHGVLKD…AAPIAAIVRA (114 aa).

It belongs to the cyclic amide hydrolase (CyAH) family. In terms of assembly, homotetramer.

Functionally, cyclic amide hydrolase of unknown substrate specificity. Catalyzes the hydrolytic ring-opening of a cyclic amide. Does not act on cyanuric acid nor barbituric acid. The polypeptide is Cyclic amide hydrolase (Azorhizobium caulinodans (strain ATCC 43989 / DSM 5975 / JCM 20966 / LMG 6465 / NBRC 14845 / NCIMB 13405 / ORS 571)).